The chain runs to 190 residues: Protein PLANT CADMIUM RESISTANCE 8 (190 aa).

Positions 1–31 (MGRVTTPSEEDSNNGLPVQQPGTPNQRTRVP) are disordered. Over residues 13–28 (NNGLPVQQPGTPNQRT) the composition is skewed to polar residues. Thr23 bears the Phosphothreonine mark. A helical membrane pass occupies residues 94–113 (LGTFMYLLMMPALCSHWVMG).

Belongs to the cornifelin family.

The protein localises to the cell membrane. May be involved in heavy metals transport. This is Protein PLANT CADMIUM RESISTANCE 8 (PCR8) from Arabidopsis thaliana (Mouse-ear cress).